We begin with the raw amino-acid sequence, 97 residues long: MRSCTSFSDEPMTGWMAAAVVTLMIRMCFSVYTMLSESCQRMVIVGYGRCFADRQNLMVCLRSMPNVFTGSCARMRCCLSENLLYRHRNGHIQAEWP.

The sequence is that of Insertion element IS2 uncharacterized 11.1 kDa protein from Escherichia coli.